The chain runs to 403 residues: Zinc finger CCHC domain-containing protein 3 (403 aa).

Residues 1–158 form a disordered region; that stretch reads MATGGGAEEE…PLQDEPAAAA (158 aa). 2 stretches are compositionally biased toward basic and acidic residues: residues 26–38 and 47–65; these read ARGE…REKM and LAEK…REEE. Gly residues predominate over residues 67–79; that stretch reads GGGGGSAGLGGPA. Residues 95-121 are compositionally biased toward basic and acidic residues; it reads GDPKGRRRDPAGEAVDPRKKKGAAEAG. Low complexity predominate over residues 128-139; the sequence is AAAAAMATPARP. A Phosphotyrosine modification is found at Y201. 3 consecutive CCHC-type zinc fingers follow at residues 335-350, 352-368, and 372-387; these read CFKC…SCTQ, RCFR…YCRK, and CNLC…QCPK.

Interacts with CGAS. Interacts with RIGI. Interacts with IFIH1/MDA5.

Its subcellular location is the cytoplasm. Functionally, nucleic acid-binding protein involved in innate immune response to DNA and RNA viruses. Binds DNA and RNA in the cytoplasm and acts by promoting recognition of viral nucleic acids by virus sensors, such as RIGI, IFIH1/MDA5 and CGAS. Acts as a co-sensor for recognition of double-stranded DNA (dsDNA) by cGAS in the cytoplasm, thereby playing a role in innate immune response to cytosolic dsDNA and DNA virus. Binds dsDNA and probably acts by promoting sensing of dsDNA by CGAS, leading to enhance CGAS oligomerization and activation. Promotes sensing of viral RNA by RIGI-like receptors proteins RIGI and IFIH1/MDA5 via two mechanisms: binds double-stranded RNA (dsRNA), enhancing the binding of RIGI and IFIH1/MDA5 to dsRNA and promotes 'Lys-63'-linked ubiquitination and subsequent activation of RIGI and IFIH1/MDA5. The chain is Zinc finger CCHC domain-containing protein 3 from Homo sapiens (Human).